Here is a 365-residue protein sequence, read N- to C-terminus: Aminomethyltransferase (365 aa).

The protein belongs to the GcvT family. The glycine cleavage system is composed of four proteins: P, T, L and H.

The catalysed reaction is N(6)-[(R)-S(8)-aminomethyldihydrolipoyl]-L-lysyl-[protein] + (6S)-5,6,7,8-tetrahydrofolate = N(6)-[(R)-dihydrolipoyl]-L-lysyl-[protein] + (6R)-5,10-methylene-5,6,7,8-tetrahydrofolate + NH4(+). Its function is as follows. The glycine cleavage system catalyzes the degradation of glycine. The chain is Aminomethyltransferase from Yersinia pseudotuberculosis serotype O:3 (strain YPIII).